The chain runs to 428 residues: Dihydroorotase (428 aa).

Histidine 59 and histidine 61 together coordinate Zn(2+). Substrate-binding positions include 61-63 and asparagine 93; that span reads HFR. Aspartate 151, histidine 178, and histidine 231 together coordinate Zn(2+). Asparagine 277 is a substrate binding site. Zn(2+) is bound at residue aspartate 304. Aspartate 304 is an active-site residue. Residues histidine 308 and 322–323 each bind substrate; that span reads FG.

Belongs to the metallo-dependent hydrolases superfamily. DHOase family. Class I DHOase subfamily. The cofactor is Zn(2+).

It catalyses the reaction (S)-dihydroorotate + H2O = N-carbamoyl-L-aspartate + H(+). The protein operates within pyrimidine metabolism; UMP biosynthesis via de novo pathway; (S)-dihydroorotate from bicarbonate: step 3/3. Functionally, catalyzes the reversible cyclization of carbamoyl aspartate to dihydroorotate. The chain is Dihydroorotase from Bacillus licheniformis (strain ATCC 14580 / DSM 13 / JCM 2505 / CCUG 7422 / NBRC 12200 / NCIMB 9375 / NCTC 10341 / NRRL NRS-1264 / Gibson 46).